A 207-amino-acid polypeptide reads, in one-letter code: 5-nitrosalicylic acid 1,2-dioxygenase (207 aa).

The Cupin type-2 domain maps to 85 to 151 (QLIHPGEEVT…GDKDTLMYVI (67 aa)).

The catalysed reaction is 5-nitrosalicylate + O2 = 2-oxo-3-(5-oxofuran-2-ylidene)propanoate + nitrite + H(+). Dioxygenase that catalyzes the cleavage of the aromatic ring of 5-nitrosalicylate (5NSA) without prior removal of the nitro group in biodegradation of 5-nitroanthranilate. The chain is 5-nitrosalicylic acid 1,2-dioxygenase (naaB) from Bradyrhizobium sp.